The chain runs to 208 residues: ATP-dependent Clp protease proteolytic subunit 2 (208 aa).

The Nucleophile role is filled by Ser102. The active site involves His127.

It belongs to the peptidase S14 family. Fourteen ClpP subunits assemble into 2 heptameric rings which stack back to back to give a disk-like structure with a central cavity, resembling the structure of eukaryotic proteasomes.

It is found in the cytoplasm. It carries out the reaction Hydrolysis of proteins to small peptides in the presence of ATP and magnesium. alpha-casein is the usual test substrate. In the absence of ATP, only oligopeptides shorter than five residues are hydrolyzed (such as succinyl-Leu-Tyr-|-NHMec, and Leu-Tyr-Leu-|-Tyr-Trp, in which cleavage of the -Tyr-|-Leu- and -Tyr-|-Trp bonds also occurs).. Functionally, cleaves peptides in various proteins in a process that requires ATP hydrolysis. Has a chymotrypsin-like activity. Plays a major role in the degradation of misfolded proteins. The chain is ATP-dependent Clp protease proteolytic subunit 2 from Chelativorans sp. (strain BNC1).